Reading from the N-terminus, the 246-residue chain is U2 small nuclear ribonucleoprotein A' (246 aa).

LRR repeat units follow at residues 19 to 40 (RDRE…GVTR), 42 to 63 (QNDA…PLLQ), 64 to 85 (QLKT…IGHS), and 88 to 109 (ALHS…VHLS). The region spanning 122-160 (TPASREAQYREFVIWKLPQVRVLDYQRIKDKERARAKDL) is the LRRCT domain.

The protein belongs to the U2 small nuclear ribonucleoprotein A family. Associated with the spliceosome.

The protein localises to the nucleus. In terms of biological role, involved in pre-mRNA splicing. This chain is U2 small nuclear ribonucleoprotein A' (LEA1), found in Mycosarcoma maydis (Corn smut fungus).